The primary structure comprises 626 residues: Putative folylpolyglutamate synthase (626 aa).

144–147 (GKGS) contacts ATP. The Mg(2+) site is built by S168, E235, and H263. Residues R412 and D430 each coordinate ATP.

The protein belongs to the folylpolyglutamate synthase family.

The catalysed reaction is (6S)-5,6,7,8-tetrahydrofolyl-(gamma-L-Glu)(n) + L-glutamate + ATP = (6S)-5,6,7,8-tetrahydrofolyl-(gamma-L-Glu)(n+1) + ADP + phosphate + H(+). It participates in cofactor biosynthesis; tetrahydrofolylpolyglutamate biosynthesis. In terms of biological role, conversion of folates to polyglutamate derivatives. In Dictyostelium discoideum (Social amoeba), this protein is Putative folylpolyglutamate synthase (folC).